Consider the following 139-residue polypeptide: MGAMPRVQSVVAPILREDPRLAGVTIVTWVPDIDFREFPMINIRRIGGIRNANAPKLHSLPVVEMSAYSTDGLIECEELYETALEVLYDAVKNGTQTPAGYLSSIFETMGATQFSSLYQDSWRIQGLIRLGVRTPRSTT.

The sequence is that of Gene 22 protein (22) from Mycobacterium phage D29 (Mycobacteriophage D29).